The primary structure comprises 370 residues: Histidinol-phosphate aminotransferase 1 (370 aa).

The residue at position 229 (K229) is an N6-(pyridoxal phosphate)lysine.

The protein belongs to the class-II pyridoxal-phosphate-dependent aminotransferase family. Histidinol-phosphate aminotransferase subfamily. In terms of assembly, homodimer. Requires pyridoxal 5'-phosphate as cofactor.

It catalyses the reaction L-histidinol phosphate + 2-oxoglutarate = 3-(imidazol-4-yl)-2-oxopropyl phosphate + L-glutamate. The protein operates within amino-acid biosynthesis; L-histidine biosynthesis; L-histidine from 5-phospho-alpha-D-ribose 1-diphosphate: step 7/9. The sequence is that of Histidinol-phosphate aminotransferase 1 from Nitrosococcus oceani (strain ATCC 19707 / BCRC 17464 / JCM 30415 / NCIMB 11848 / C-107).